Here is a 511-residue protein sequence, read N- to C-terminus: Cytochrome P450 705A5 (511 aa).

The chain crosses the membrane as a helical span at residues 12 to 30 (CFIFLLLCLFSRLSYDLFF). Cys454 is a heme binding site.

This sequence belongs to the cytochrome P450 family. Requires heme as cofactor. Expressed primarily in the root epidermis.

It is found in the membrane. Functionally, converts thalian-diol to a desaturated thalian-diol. This is Cytochrome P450 705A5 (CYP705A5) from Arabidopsis thaliana (Mouse-ear cress).